A 650-amino-acid chain; its full sequence is Sodium-dependent phosphate transporter 2 (650 aa).

Residues 1-5 (MAMDG) are Extracellular-facing. A helical membrane pass occupies residues 6 to 26 (YLWMVILGFIIAFILAFSVGA). The Cytoplasmic portion of the chain corresponds to 27–46 (NDVANSFGTAVGSGVVTLRQ). The chain crosses the membrane as a helical span at residues 47-67 (ACILASIFETTGSVLLGAKVG). At 68 to 83 (ETIRKGIIDVNLYNDT) the chain is on the extracellular side. N81 is a glycosylation site (N-linked (GlcNAc...) asparagine). The chain crosses the membrane as a helical span at residues 84-104 (VVTLMAGEVSAMVGSAVWQLI). Topologically, residues 105 to 109 (ASFLR) are cytoplasmic. Residues 110–130 (LPISGTHCIVGSTIGFSLVAN) form a helical membrane-spanning segment. Topologically, residues 131–142 (GTKGVQWMELVK) are extracellular. The helical transmembrane segment at 143–163 (IVASWFISPLLSGFMSGVLFV) threads the bilayer. At 164–192 (LIRMFILTKEDPVPNGLQALPLFYAATIA) the chain is on the cytoplasmic side. A helical transmembrane segment spans residues 193 to 212 (INVFSIMYTGAPVLGLSLPI). A topological domain (extracellular) is located at residue W213. The chain crosses the membrane as a helical span at residues 214–234 (AIALISFGVALLFAFFVWLFV). Residues 235–482 (CPWMRRKIAG…EEKEEKDTAE (248 aa)) lie on the Cytoplasmic side of the membrane. 6 positions are modified to phosphoserine: S253, S256, S259, S268, S315, and S384. The disordered stretch occupies residues 268-310 (SPFKELPGAKASDDSAVPLTNPTGEAVGPSEGTSTGNHPRTAY). Residues 483 to 503 (VHLLFHFLQVLTACFGSFAHG) traverse the membrane as a helical segment. At 504–530 (GNDVSNAIGPLVALWLIYEQGGVMQEA) the chain is on the extracellular side. Residues 531 to 551 (ATPVWLLFYGGVGICTGLWVW) traverse the membrane as a helical segment. Topologically, residues 552–571 (GRRVIQTMGKDLTPITPSSG) are cytoplasmic. Residues 572-586 (FTIELASAFTVVIAS) form a helical membrane-spanning segment. Residues 587–593 (NIGLPVS) lie on the Extracellular side of the membrane. The chain crosses the membrane as a helical span at residues 594 to 609 (TTHCKVGSVVAVGWIR). At 610–621 (SRKAVDWHLFRN) the chain is on the cytoplasmic side. The chain crosses the membrane as a helical span at residues 622-642 (IFVAWFVTVPVAGLFSAAIMA). The Extracellular segment spans residues 643-650 (IFMYGILS).

It belongs to the inorganic phosphate transporter (PiT) (TC 2.A.20) family. Homodimer.

The protein resides in the cell membrane. It localises to the apical cell membrane. It catalyses the reaction 2 Na(+)(out) + phosphate(out) = 2 Na(+)(in) + phosphate(in). Sodium-phosphate symporter which preferentially transports the monovalent form of phosphate with a stoichiometry of two sodium ions per phosphate ion. Plays a critical role in the determination of bone quality and strength by providing phosphate for bone mineralization. Required to maintain normal cerebrospinal fluid phosphate levels. Mediates phosphate-induced calcification of vascular smooth muscle cells (VCMCs) and can functionally compensate for loss of SLC20A1 in VCMCs. Its function is as follows. (Microbial infection) Functions as a retroviral receptor and confers hamster cells susceptibility to infection to Gibbon Ape Leukemia Virus (GaLV) and amphotropic murine leukemia virus (A-MuLV). The protein is Sodium-dependent phosphate transporter 2 (SLC20A2) of Cricetulus griseus (Chinese hamster).